The primary structure comprises 684 residues: MASGLTANKKLRHKITAAALLVTLGVVYGDIGTSPLYVMKSIVAGNGGMGHFDTDFLVGSVSLIFWTLLIITTVKYVLIALRADNNGEGGIFALYTLVRQRARWLVLPAMVGGAALLADGMLTPAVTVTTAIEGLKGVHINGNILIDNQQQVIWVTILIITFLFFIQRFGTDLIGKAFGPIMFVWFTFLGVAGFIALSKDWSMLRALNPYYALHLLVSPDNKMGLFILGSIFLATTGAEALYSDMGHVGRGNIYLSWPYVNICLVLNYFGQAVWLDQNSKVTAFNKITDFNPFFQMLPESIRLGAIILATLAAIIASQALISGSYTLVSEAIKLRFLPRLHIIYPTRLKGQLYIPVVNTILWLACLAIIGYFKTSAEMEGAYGLAITITMLMTTLLLYQYLRSRHAPAVIAIGTLIFFSAIETVFFISSAVKFLHGGYVTAMIAFIILAVMYVWQYGGRIRDDNTYRAEMASLFAYKNQLSELRNDPDYPTYTTNLVYMTQIANDHYIKKEILYSILDKRPKRARVYWFVTVNVTDEPYTAEYTTDTYGTDYMVNVQLYLGFRMEQQVNVFLRQIVNDMMREGELPTQPQKYTTIPDRQVGDWTFVLLHEELSPQTQIKGFQKAIIQARLRLQHIAVSPAQWFGLEYADTIDETVPLVLGKIPITKLNRLTRSQAEAQPEDEDD.

12 consecutive transmembrane segments (helical) span residues 19-39, 61-81, 104-124, 151-171, 177-197, 223-243, 255-275, 303-323, 352-372, 381-401, 407-427, and 433-453; these read ALLV…LYVM, VSLI…LIAL, WLVL…MLTP, QVIW…RFGT, AFGP…FIAL, MGLF…ALYS, LSWP…AVWL, LGAI…LISG, LYIP…IGYF, AYGL…YQYL, PAVI…VFFI, and FLHG…VMYV.

This sequence belongs to the HAK/KUP transporter (TC 2.A.72) family.

It localises to the cell membrane. It carries out the reaction K(+)(in) + H(+)(in) = K(+)(out) + H(+)(out). In terms of biological role, transport of potassium into the cell. Likely operates as a K(+):H(+) symporter. The protein is Probable potassium transport system protein Kup of Lacticaseibacillus casei (strain BL23) (Lactobacillus casei).